Consider the following 95-residue polypeptide: METKHIILLAIVAIIIALPLIIYAGKGEEEGYFGGSDDQGCEVVEELGYKPWFHPIWEPPSGEIESLLFALQAAIGAIIIGYYIGYYNAKRQVAA.

Transmembrane regions (helical) follow at residues 5-25 and 67-87; these read HIIL…IYAG and LLFA…IGYY.

It belongs to the CbiN family. In terms of assembly, forms an energy-coupling factor (ECF) transporter complex composed of an ATP-binding protein (A component, CbiO), a transmembrane protein (T component, CbiQ) and 2 possible substrate-capture proteins (S components, CbiM and CbiN) of unknown stoichimetry.

It is found in the cell membrane. Its pathway is cofactor biosynthesis; adenosylcobalamin biosynthesis. Its function is as follows. Part of the energy-coupling factor (ECF) transporter complex CbiMNOQ involved in cobalt import. The protein is Cobalt transport protein CbiN of Methanocaldococcus jannaschii (strain ATCC 43067 / DSM 2661 / JAL-1 / JCM 10045 / NBRC 100440) (Methanococcus jannaschii).